The following is a 229-amino-acid chain: Cytidylate kinase (229 aa).

ATP is bound at residue 10–18 (GFSSCGKST).

It belongs to the cytidylate kinase family. Type 1 subfamily.

It localises to the cytoplasm. It catalyses the reaction CMP + ATP = CDP + ADP. The catalysed reaction is dCMP + ATP = dCDP + ADP. The sequence is that of Cytidylate kinase from Bacteroides thetaiotaomicron (strain ATCC 29148 / DSM 2079 / JCM 5827 / CCUG 10774 / NCTC 10582 / VPI-5482 / E50).